Consider the following 579-residue polypeptide: uncharacterized protein (579 aa).

A run of 3 helical transmembrane segments spans residues 173 to 193 (IAMGLAGLAGGALIGLTGGLA), 196 to 216 (FVAAGLGTLFAGLGLGTMIGA), and 218 to 238 (YLGTLITSAPMITALFGGFGA).

The protein belongs to the TMCO4 family.

Its subcellular location is the cytoplasm. It localises to the nucleus membrane. This is an uncharacterized protein from Schizosaccharomyces pombe (strain 972 / ATCC 24843) (Fission yeast).